A 1518-amino-acid chain; its full sequence is Putative cellulose synthase 2 (1518 aa).

The tract at residues 1-731 is catalytic; the sequence is MYGTWFTTGK…EEKLEKQSFV (731 aa). The next 3 membrane-spanning stretches (helical) occupy residues 24–44, 71–91, and 105–125; these read PVWVPVVLGVVLMAFVGSVRI, ITVFLMMLSLLVSLRYIVWRL, and LAVLLLLAEAYALMTLCLSYF. The catalytic subdomain A stretch occupies residues 144–237; the sequence is QWPSVDVFVP…FAVIFDCDHV (94 aa). D186 is an active-site residue. 2 residues coordinate substrate: D233 and D235. Positions 314–374 are catalytic subdomain B; it reads EAVMGIGGFA…GQRVRWARGM (61 aa). D330 is a catalytic residue. 5 consecutive transmembrane segments (helical) span residues 404-424, 427-447, 465-485, 514-534, and 543-563; these read FLFAIPRLTFLVSPLAFLFLG, IIAASPLAISVYALPHIFHSV, IYETSLALFLVRITIVTLLQP, ILAGVLCAALLRGVFGIVWQF, and FILNTLWVVISLIIVLASIAV. Residues 569-668 form the PilZ domain; sequence QTRNAPRVSV…ERQVVSMVFG (100 aa). The segment at 732–1518 is cyclic di-GMP binding domain; it reads LKPVPRSARH…IARDDLTGEL (787 aa). The disordered stretch occupies residues 765 to 785; it reads APSPDQSGVTAETPFGDSNTG. Residues 768–785 show a composition bias toward polar residues; it reads PDQSGVTAETPFGDSNTG. A helical membrane pass occupies residues 1481-1501; it reads ALYLAGLAGAGLAALGVWAWL.

It in the N-terminal section; belongs to the glycosyltransferase 2 family. In the C-terminal section; belongs to the AcsB/BcsB family.

The protein localises to the cell inner membrane. It catalyses the reaction [(1-&gt;4)-beta-D-glucosyl](n) + UDP-alpha-D-glucose = [(1-&gt;4)-beta-D-glucosyl](n+1) + UDP + H(+). The protein operates within glycan metabolism; bacterial cellulose biosynthesis. This is Putative cellulose synthase 2 (bcsABII-A) from Komagataeibacter xylinus (Gluconacetobacter xylinus).